A 379-amino-acid polypeptide reads, in one-letter code: Multicilin (379 aa).

Disordered stretches follow at residues Ser26–Ser46 and Leu87–Leu106. Positions Glu175–Leu223 form a coiled coil. The segment covering Leu289–Ser309 has biased composition (basic and acidic residues). Residues Leu289–Arg311 are disordered.

The protein belongs to the geminin family. As to quaternary structure, heterodimer (via coiled-coil domain) with GMNN (via coiled-coil domain); targets GMNN to the nucleus. Can form homodimers (in vitro, via coiled-coil domain), but these are much less stable than the heterodimer formed with GMNN.

It is found in the nucleus. In terms of biological role, transcription regulator specifically required for multiciliate cell differentiation. Acts in a multiprotein complex containing E2F4 and E2F5 that binds and activates genes required for centriole biogenesis. Required for the deuterosome-mediated acentriolar pathway. Plays a role in mitotic cell cycle progression by promoting cell cycle exit. Modulates GMNN activity by reducing its affinity for CDT1. This is Multicilin (Mcidas) from Rattus norvegicus (Rat).